The chain runs to 174 residues: Peptide deformylase (174 aa).

Fe cation contacts are provided by C91 and H133. E134 is an active-site residue. H137 serves as a coordination point for Fe cation.

The protein belongs to the polypeptide deformylase family. Requires Fe(2+) as cofactor.

It carries out the reaction N-terminal N-formyl-L-methionyl-[peptide] + H2O = N-terminal L-methionyl-[peptide] + formate. In terms of biological role, removes the formyl group from the N-terminal Met of newly synthesized proteins. Requires at least a dipeptide for an efficient rate of reaction. N-terminal L-methionine is a prerequisite for activity but the enzyme has broad specificity at other positions. This Fusobacterium nucleatum subsp. nucleatum (strain ATCC 25586 / DSM 15643 / BCRC 10681 / CIP 101130 / JCM 8532 / KCTC 2640 / LMG 13131 / VPI 4355) protein is Peptide deformylase.